A 29-amino-acid polypeptide reads, in one-letter code: Glucagon (29 aa).

Belongs to the glucagon family.

The protein localises to the secreted. Its function is as follows. Glucagon plays a key role in glucose metabolism and homeostasis. Regulates blood glucose by increasing gluconeogenesis and decreasing glycolysis. The chain is Glucagon (GCG) from Meleagris gallopavo (Wild turkey).